The primary structure comprises 158 residues: Large ribosomal subunit protein uL30 (158 aa).

This sequence belongs to the universal ribosomal protein uL30 family. Part of the 50S ribosomal subunit.

The protein is Large ribosomal subunit protein uL30 of Saccharolobus solfataricus (strain ATCC 35092 / DSM 1617 / JCM 11322 / P2) (Sulfolobus solfataricus).